Reading from the N-terminus, the 227-residue chain is ATP synthase F(0) complex subunit a (227 aa).

A run of 6 helical transmembrane segments spans residues 14-34 (LFGI…FPAP), 69-89 (WGPY…LGLL), 98-118 (QLSV…IIGL), 132-152 (EGTP…SLFI), 180-200 (FVLL…LFLL), and 202-222 (LLEV…LSLY).

Belongs to the ATPase A chain family. In terms of assembly, component of the ATP synthase complex composed at least of ATP5F1A/subunit alpha, ATP5F1B/subunit beta, ATP5MC1/subunit c (homooctomer), MT-ATP6/subunit a, MT-ATP8/subunit 8, ATP5ME/subunit e, ATP5MF/subunit f, ATP5MG/subunit g, ATP5MK/subunit k, ATP5MJ/subunit j, ATP5F1C/subunit gamma, ATP5F1D/subunit delta, ATP5F1E/subunit epsilon, ATP5PF/subunit F6, ATP5PB/subunit b, ATP5PD/subunit d, ATP5PO/subunit OSCP. ATP synthase complex consists of a soluble F(1) head domain (subunits alpha(3) and beta(3)) - the catalytic core - and a membrane F(0) domain - the membrane proton channel (subunits c, a, 8, e, f, g, k and j). These two domains are linked by a central stalk (subunits gamma, delta, and epsilon) rotating inside the F1 region and a stationary peripheral stalk (subunits F6, b, d, and OSCP). Interacts with DNAJC30; interaction is direct.

It localises to the mitochondrion inner membrane. It carries out the reaction H(+)(in) = H(+)(out). Subunit a, of the mitochondrial membrane ATP synthase complex (F(1)F(0) ATP synthase or Complex V) that produces ATP from ADP in the presence of a proton gradient across the membrane which is generated by electron transport complexes of the respiratory chain. ATP synthase complex consist of a soluble F(1) head domain - the catalytic core - and a membrane F(1) domain - the membrane proton channel. These two domains are linked by a central stalk rotating inside the F(1) region and a stationary peripheral stalk. During catalysis, ATP synthesis in the catalytic domain of F(1) is coupled via a rotary mechanism of the central stalk subunits to proton translocation. With the subunit c (ATP5MC1), forms the proton-conducting channel in the F(0) domain, that contains two crucial half-channels (inlet and outlet) that facilitate proton movement from the mitochondrial intermembrane space (IMS) into the matrix. Protons are taken up via the inlet half-channel and released through the outlet half-channel, following a Grotthuss mechanism. The chain is ATP synthase F(0) complex subunit a from Tetraodon nigroviridis (Spotted green pufferfish).